A 99-amino-acid polypeptide reads, in one-letter code: SAGA-associated factor 11 (99 aa).

The SGF11-type zinc-finger motif lies at 71–92; sequence IHCENCGRDVSANRLAAHLQRC.

Belongs to the SGF11 family. Component of the 1.8 MDa SAGA transcription coactivator-HAT complex. SAGA is built of 5 distinct domains with specialized functions. Within the SAGA complex, SUS1, SGF11, SGF73 and UBP8 form an additional subcomplex of SAGA called the DUB module (deubiquitination module). Interacts directly with SGF73, SUS1 and UBP8.

It localises to the nucleus. Its function is as follows. Functions as a component of the transcription regulatory histone acetylation (HAT) complex SAGA. At the promoters, SAGA is required for recruitment of the basal transcription machinery. It influences RNA polymerase II transcriptional activity through different activities such as TBP interaction and promoter selectivity, interaction with transcription activators, and chromatin modification through histone acetylation and deubiquitination. SAGA acetylates nucleosomal histone H3 to some extent (to form H3K9ac, H3K14ac, H3K18ac and H3K23ac). SAGA interacts with DNA via upstream activating sequences (UASs). Involved in transcriptional regulation of a subset of SAGA-regulated genes. Within the SAGA complex, participates in a subcomplex, that specifically deubiquitinates histones H2B. This chain is SAGA-associated factor 11, found in Saccharomyces cerevisiae (strain YJM789) (Baker's yeast).